Here is a 621-residue protein sequence, read N- to C-terminus: Chaperone protein HtpG (621 aa).

Residues 1–328 are a; substrate-binding; that stretch reads MKQEKKKFDA…SEDLPLNISR (328 aa). Positions 329–544 are b; the sequence is ESLQHNNVLE…EAAMDIRMER (216 aa). The disordered stretch occupies residues 479–498; that stretch reads VDQATSSSEEKNKDDKKSDD. The segment covering 486-498 has biased composition (basic and acidic residues); it reads SEEKNKDDKKSDD. A c region spans residues 545-621; sequence FLIEQKQIAN…LNDIVQKAIL (77 aa).

Belongs to the heat shock protein 90 family. Homodimer.

The protein localises to the cytoplasm. In terms of biological role, molecular chaperone. Has ATPase activity. The protein is Chaperone protein HtpG of Rickettsia bellii (strain OSU 85-389).